A 350-amino-acid chain; its full sequence is UDP-glucose 4-epimerase (350 aa).

7–38 (KILVTGSAGFIGTHTVVQLLNNGFNVSIIDNF) contributes to the NAD(+) binding site. S133 lines the substrate pocket. Catalysis depends on Y157, which acts as the Proton acceptor.

Belongs to the NAD(P)-dependent epimerase/dehydratase family. NAD(+) serves as cofactor.

It catalyses the reaction UDP-alpha-D-glucose = UDP-alpha-D-galactose. It participates in carbohydrate metabolism; galactose metabolism. The chain is UDP-glucose 4-epimerase (GALE) from Pisum sativum (Garden pea).